Consider the following 483-residue polypeptide: 3-isopropylmalate dehydratase large subunit (483 aa).

[4Fe-4S] cluster-binding residues include C361, C424, and C427.

It belongs to the aconitase/IPM isomerase family. LeuC type 1 subfamily. As to quaternary structure, heterodimer of LeuC and LeuD. The cofactor is [4Fe-4S] cluster.

It carries out the reaction (2R,3S)-3-isopropylmalate = (2S)-2-isopropylmalate. It functions in the pathway amino-acid biosynthesis; L-leucine biosynthesis; L-leucine from 3-methyl-2-oxobutanoate: step 2/4. In terms of biological role, catalyzes the isomerization between 2-isopropylmalate and 3-isopropylmalate, via the formation of 2-isopropylmaleate. The chain is 3-isopropylmalate dehydratase large subunit from Polaromonas naphthalenivorans (strain CJ2).